Consider the following 284-residue polypeptide: Bifunctional protein FolD (284 aa).

NADP(+)-binding positions include 165 to 167 (GRS) and S190.

It belongs to the tetrahydrofolate dehydrogenase/cyclohydrolase family. In terms of assembly, homodimer.

It carries out the reaction (6R)-5,10-methylene-5,6,7,8-tetrahydrofolate + NADP(+) = (6R)-5,10-methenyltetrahydrofolate + NADPH. The catalysed reaction is (6R)-5,10-methenyltetrahydrofolate + H2O = (6R)-10-formyltetrahydrofolate + H(+). It participates in one-carbon metabolism; tetrahydrofolate interconversion. Functionally, catalyzes the oxidation of 5,10-methylenetetrahydrofolate to 5,10-methenyltetrahydrofolate and then the hydrolysis of 5,10-methenyltetrahydrofolate to 10-formyltetrahydrofolate. The chain is Bifunctional protein FolD from Streptococcus agalactiae serotype Ia (strain ATCC 27591 / A909 / CDC SS700).